Here is a 462-residue protein sequence, read N- to C-terminus: Cysteine--tRNA ligase (462 aa).

Residue Cys30 coordinates Zn(2+). Residues 32 to 42 (PTVYDRAHLGN) carry the 'HIGH' region motif. Zn(2+)-binding residues include Cys221, His246, and Glu250. Positions 279–283 (KMSKS) match the 'KMSKS' region motif. Residue Lys282 participates in ATP binding.

It belongs to the class-I aminoacyl-tRNA synthetase family. Monomer. Zn(2+) is required as a cofactor.

Its subcellular location is the cytoplasm. It catalyses the reaction tRNA(Cys) + L-cysteine + ATP = L-cysteinyl-tRNA(Cys) + AMP + diphosphate. This chain is Cysteine--tRNA ligase, found in Paracoccus denitrificans (strain Pd 1222).